The sequence spans 307 residues: Oxygen-dependent coproporphyrinogen-III oxidase (307 aa).

Serine 99 provides a ligand contact to substrate. A divalent metal cation-binding residues include histidine 103 and histidine 113. The active-site Proton donor is the histidine 113. Residue 115 to 117 participates in substrate binding; sequence NVR. A divalent metal cation contacts are provided by histidine 152 and histidine 182. An important for dimerization region spans residues 247–282; sequence YVEFNLVFDRGTLFGLQSGGRTESILMSMPPVANWR. 265-267 is a substrate binding site; it reads GGR.

It belongs to the aerobic coproporphyrinogen-III oxidase family. As to quaternary structure, homodimer. A divalent metal cation serves as cofactor.

It localises to the cytoplasm. The catalysed reaction is coproporphyrinogen III + O2 + 2 H(+) = protoporphyrinogen IX + 2 CO2 + 2 H2O. Its pathway is porphyrin-containing compound metabolism; protoporphyrin-IX biosynthesis; protoporphyrinogen-IX from coproporphyrinogen-III (O2 route): step 1/1. Involved in the heme biosynthesis. Catalyzes the aerobic oxidative decarboxylation of propionate groups of rings A and B of coproporphyrinogen-III to yield the vinyl groups in protoporphyrinogen-IX. This is Oxygen-dependent coproporphyrinogen-III oxidase from Burkholderia lata (strain ATCC 17760 / DSM 23089 / LMG 22485 / NCIMB 9086 / R18194 / 383).